The sequence spans 467 residues: Translation initiation factor eIF2B subunit delta (467 aa).

The tract at residues 1–106 (MGFSAEQAKK…QNPQNSPETD (106 aa)) is disordered. Phosphoserine is present on residues S16, S19, S21, and S23. Residues 16 to 37 (SPVSESSSVGGTSPATASSVVS) are compositionally biased toward polar residues. Phosphothreonine is present on T27. Phosphoserine is present on residues S28 and S37. A compositionally biased stretch (basic residues) spans 51-61 (LKKARKQASRR). Residues 84-102 (PNKNSNQQKKASKQNPQNS) show a composition bias toward low complexity.

The protein belongs to the eIF-2B alpha/beta/delta subunits family. As to quaternary structure, component of the translation initiation factor 2B (eIF2B) complex which is a heterodecamer of two sets of five different subunits: alpha, beta, gamma, delta and epsilon. Subunits alpha, beta and delta comprise a regulatory subcomplex and subunits epsilon and gamma comprise a catalytic subcomplex. Within the complex, the hexameric regulatory complex resides at the center, with the two heterodimeric catalytic subcomplexes bound on opposite sides.

Its subcellular location is the cytoplasm. The protein localises to the cytosol. Functionally, acts as a component of the translation initiation factor 2B (eIF2B) complex, which catalyzes the exchange of GDP for GTP on the eukaryotic initiation factor 2 (eIF2) complex gamma subunit. Its guanine nucleotide exchange factor activity is repressed when bound to eIF2 complex phosphorylated on the alpha subunit, thereby limiting the amount of methionyl-initiator methionine tRNA available to the ribosome and consequently global translation is repressed. In Schizosaccharomyces pombe (strain 972 / ATCC 24843) (Fission yeast), this protein is Translation initiation factor eIF2B subunit delta (tif224).